The chain runs to 105 residues: Putative pterin-4-alpha-carbinolamine dehydratase (105 aa).

It belongs to the pterin-4-alpha-carbinolamine dehydratase family.

It carries out the reaction (4aS,6R)-4a-hydroxy-L-erythro-5,6,7,8-tetrahydrobiopterin = (6R)-L-erythro-6,7-dihydrobiopterin + H2O. This Sinorhizobium fredii (strain NBRC 101917 / NGR234) protein is Putative pterin-4-alpha-carbinolamine dehydratase.